We begin with the raw amino-acid sequence, 850 residues long: Penicillin-binding protein 1A (850 aa).

Residues 1–5 are Cytoplasmic-facing; sequence MKFVK. The chain crosses the membrane as a helical; Signal-anchor for type II membrane protein span at residues 6 to 26; it reads YFLILAVCCILLGAGSIYGLY. At 27–850 the chain is on the periplasmic side; that stretch reads RYIEPQLPDV…IDNGEAQELF (824 aa). The interval 48–216 is transglycosylase; sequence MQIYSADGEL…STFNPLYSMD (169 aa). Residue glutamate 86 is the Proton donor; for transglycosylase activity of the active site. The tract at residues 400-710 is transpeptidase; it reads DVLQTGQQIW…GWRAGRDLQR (311 aa). Serine 465 acts as the Acyl-ester intermediate; for transpeptidase activity in catalysis.

In the N-terminal section; belongs to the glycosyltransferase 51 family. It in the C-terminal section; belongs to the transpeptidase family.

The protein localises to the cell inner membrane. The enzyme catalyses [GlcNAc-(1-&gt;4)-Mur2Ac(oyl-L-Ala-gamma-D-Glu-L-Lys-D-Ala-D-Ala)](n)-di-trans,octa-cis-undecaprenyl diphosphate + beta-D-GlcNAc-(1-&gt;4)-Mur2Ac(oyl-L-Ala-gamma-D-Glu-L-Lys-D-Ala-D-Ala)-di-trans,octa-cis-undecaprenyl diphosphate = [GlcNAc-(1-&gt;4)-Mur2Ac(oyl-L-Ala-gamma-D-Glu-L-Lys-D-Ala-D-Ala)](n+1)-di-trans,octa-cis-undecaprenyl diphosphate + di-trans,octa-cis-undecaprenyl diphosphate + H(+). It carries out the reaction Preferential cleavage: (Ac)2-L-Lys-D-Ala-|-D-Ala. Also transpeptidation of peptidyl-alanyl moieties that are N-acyl substituents of D-alanine.. It functions in the pathway cell wall biogenesis; peptidoglycan biosynthesis. Cell wall formation. Synthesis of cross-linked peptidoglycan from the lipid intermediates. The enzyme has a penicillin-insensitive transglycosylase N-terminal domain (formation of linear glycan strands) and a penicillin-sensitive transpeptidase C-terminal domain (cross-linking of the peptide subunits). The polypeptide is Penicillin-binding protein 1A (mrcA) (Escherichia coli (strain K12)).